Consider the following 475-residue polypeptide: Putative aldehyde dehydrogenase (475 aa).

NAD(+)-binding positions include 146-147 (WN) and 223-224 (GS). E245 acts as the Proton acceptor in catalysis. NAD(+) is bound at residue L246. The active-site Nucleophile is C279. E379 is a binding site for NAD(+).

It belongs to the aldehyde dehydrogenase family.

It catalyses the reaction an aldehyde + NAD(+) + H2O = a carboxylate + NADH + 2 H(+). The chain is Putative aldehyde dehydrogenase from Staphylococcus aureus (strain bovine RF122 / ET3-1).